A 551-amino-acid chain; its full sequence is Urocanate hydratase (551 aa).

Residues 48–49, Gln126, 172–174, Glu192, Arg197, 238–239, 259–263, 269–270, and Tyr318 each bind NAD(+); these read GG, GMG, NA, QTSAH, and YI. The active site involves Cys406. Gly488 contributes to the NAD(+) binding site.

Belongs to the urocanase family. Requires NAD(+) as cofactor.

The protein resides in the cytoplasm. The enzyme catalyses 4-imidazolone-5-propanoate = trans-urocanate + H2O. The protein operates within amino-acid degradation; L-histidine degradation into L-glutamate; N-formimidoyl-L-glutamate from L-histidine: step 2/3. Catalyzes the conversion of urocanate to 4-imidazolone-5-propionate. In Symbiobacterium thermophilum (strain DSM 24528 / JCM 14929 / IAM 14863 / T), this protein is Urocanate hydratase.